The following is a 146-amino-acid chain: UPF0260 protein SO_2573 (146 aa).

The protein belongs to the UPF0260 family.

The chain is UPF0260 protein SO_2573 from Shewanella oneidensis (strain ATCC 700550 / JCM 31522 / CIP 106686 / LMG 19005 / NCIMB 14063 / MR-1).